We begin with the raw amino-acid sequence, 453 residues long: Bifunctional protein GlmU (453 aa).

The segment at 1–231 is pyrophosphorylase; sequence MERTCLAVIL…EIEMTGCNTR (231 aa). UDP-N-acetyl-alpha-D-glucosamine is bound by residues 10 to 13, lysine 24, glutamine 77, 82 to 83, 105 to 107, glycine 143, glutamate 157, asparagine 172, and asparagine 229; these read LAAG, GT, and YGD. Residue aspartate 107 participates in Mg(2+) binding. Asparagine 229 contacts Mg(2+). The tract at residues 232–252 is linker; the sequence is AELAVIERFWQERRRHQMMLS. Positions 253-453 are N-acetyltransferase; it reads GVTMIAPETV…AIKAAKKAKA (201 aa). 2 residues coordinate UDP-N-acetyl-alpha-D-glucosamine: arginine 318 and lysine 336. Histidine 348 acts as the Proton acceptor in catalysis. UDP-N-acetyl-alpha-D-glucosamine-binding residues include tyrosine 351 and asparagine 362. Acetyl-CoA is bound by residues alanine 365, 371–372, serine 390, serine 408, and arginine 425; that span reads NY.

The protein in the N-terminal section; belongs to the N-acetylglucosamine-1-phosphate uridyltransferase family. This sequence in the C-terminal section; belongs to the transferase hexapeptide repeat family. In terms of assembly, homotrimer. Mg(2+) serves as cofactor.

The protein resides in the cytoplasm. It catalyses the reaction alpha-D-glucosamine 1-phosphate + acetyl-CoA = N-acetyl-alpha-D-glucosamine 1-phosphate + CoA + H(+). The enzyme catalyses N-acetyl-alpha-D-glucosamine 1-phosphate + UTP + H(+) = UDP-N-acetyl-alpha-D-glucosamine + diphosphate. It functions in the pathway nucleotide-sugar biosynthesis; UDP-N-acetyl-alpha-D-glucosamine biosynthesis; N-acetyl-alpha-D-glucosamine 1-phosphate from alpha-D-glucosamine 6-phosphate (route II): step 2/2. It participates in nucleotide-sugar biosynthesis; UDP-N-acetyl-alpha-D-glucosamine biosynthesis; UDP-N-acetyl-alpha-D-glucosamine from N-acetyl-alpha-D-glucosamine 1-phosphate: step 1/1. Its pathway is bacterial outer membrane biogenesis; LPS lipid A biosynthesis. Its function is as follows. Catalyzes the last two sequential reactions in the de novo biosynthetic pathway for UDP-N-acetylglucosamine (UDP-GlcNAc). The C-terminal domain catalyzes the transfer of acetyl group from acetyl coenzyme A to glucosamine-1-phosphate (GlcN-1-P) to produce N-acetylglucosamine-1-phosphate (GlcNAc-1-P), which is converted into UDP-GlcNAc by the transfer of uridine 5-monophosphate (from uridine 5-triphosphate), a reaction catalyzed by the N-terminal domain. The sequence is that of Bifunctional protein GlmU from Rhizobium johnstonii (strain DSM 114642 / LMG 32736 / 3841) (Rhizobium leguminosarum bv. viciae).